A 354-amino-acid polypeptide reads, in one-letter code: DNA-binding protein EMBP-1 (354 aa).

Disordered regions lie at residues 1–24, 106–193, and 230–273; these read MASS…TPAQ, SAAG…RSAS, and EVNA…RKQQ. 2 stretches are compositionally biased toward low complexity: residues 127 to 140 and 232 to 245; these read SSSG…QGSS and NAAA…SLSQ. Basic and acidic residues predominate over residues 246–265; it reads MDERELKRERRKQSNRESAR. The bZIP domain occupies 250 to 313; the sequence is ELKRERRKQS…KTMETENKKL (64 aa). Residues 252 to 271 are basic motif; the sequence is KRERRKQSNRESARRSRLRK. A leucine-zipper region spans residues 278–299; that stretch reads LAQKVSELTAANGTLRSELDQL.

Belongs to the bZIP family. Heterodimer.

The protein resides in the nucleus. In terms of biological role, interacts specifically with the 8-bp sequence 5'-CACGTGGC-3'in the abscisic acid response element (ABARE). Also binds to the hexamer motif 5'-ACGTCA-3' of histone gene promoters. The polypeptide is DNA-binding protein EMBP-1 (Triticum aestivum (Wheat)).